The chain runs to 431 residues: Guanine nucleotide exchange factor rei-2 (431 aa).

Polar residues predominate over residues 1–21; sequence MDETATSSEVTETFVSDPTTR. The disordered stretch occupies residues 1-28; it reads MDETATSSEVTETFVSDPTTRQFEEDGH. Coiled-coil stretches lie at residues 149–171 and 214–247; these read EVLN…AESL and LEAQ…RISE. Residues 249-298 are disordered; sequence IHEERSTGSLESAVSSDQEDQKSDFKSSESLPGNPPPYAPTAPPPYEDKY. A compositionally biased stretch (polar residues) spans 255-264; the sequence is TGSLESAVSS. Pro residues predominate over residues 281 to 293; it reads GNPPPYAPTAPPP.

It belongs to the SH3BP5 family. Interacts with rab-11.1. Binds preferentially to the GDP-bound form of rab-11.1.

Functionally, guanine nucleotide exchange factor for Rab GTPase Rab-11.1. May spatially and temporally regulate the distribution of Rab-11.1 to target membranes during embryogenesis. May play a role in cytokinesis, probably by targeting rab-11.1 to the cleavage furrows. The chain is Guanine nucleotide exchange factor rei-2 from Caenorhabditis elegans.